The following is a 121-amino-acid chain: Small ribosomal subunit protein uS13 (121 aa).

The tract at residues 94–121 (RGLPVRGQSTKNNARTRKGPKRTVGAKR) is disordered. Basic residues predominate over residues 107-121 (ARTRKGPKRTVGAKR).

Belongs to the universal ribosomal protein uS13 family. As to quaternary structure, part of the 30S ribosomal subunit. Forms a loose heterodimer with protein S19. Forms two bridges to the 50S subunit in the 70S ribosome.

Functionally, located at the top of the head of the 30S subunit, it contacts several helices of the 16S rRNA. In the 70S ribosome it contacts the 23S rRNA (bridge B1a) and protein L5 of the 50S subunit (bridge B1b), connecting the 2 subunits; these bridges are implicated in subunit movement. Contacts the tRNAs in the A and P-sites. This Natranaerobius thermophilus (strain ATCC BAA-1301 / DSM 18059 / JW/NM-WN-LF) protein is Small ribosomal subunit protein uS13.